The chain runs to 664 residues: ATP-dependent zinc metalloprotease FtsH (664 aa).

Over 1 to 9 the chain is Cytoplasmic; it reads MKQNIKRNW. Residues 10-30 traverse the membrane as a helical segment; that stretch reads IWILIVMIVIGIILYFSIRNL. Over 31–136 the chain is Extracellular; that stretch reads FSTKVAEWSI…KSVATPQPNP (106 aa). The helical transmembrane segment at 137-157 threads the bilayer; that stretch reads FLGILISSVPVLILIFVMVWI. Residues 158-664 lie on the Cytoplasmic side of the membrane; sequence YRSQVKMMNG…SLIEKTSKKE (507 aa). 229–236 provides a ligand contact to ATP; the sequence is GPPGTGKT. Residue His451 participates in Zn(2+) binding. Residue Glu452 is part of the active site. Zn(2+)-binding residues include His455 and Asp529. Positions 639–649 are enriched in basic and acidic residues; it reads IEEKDLSKNSE. Residues 639–664 are disordered; it reads IEEKDLSKNSEDNNLDSLIEKTSKKE.

This sequence in the central section; belongs to the AAA ATPase family. It in the C-terminal section; belongs to the peptidase M41 family. As to quaternary structure, homohexamer. Requires Zn(2+) as cofactor.

Its subcellular location is the cell membrane. Acts as a processive, ATP-dependent zinc metallopeptidase for both cytoplasmic and membrane proteins. Plays a role in the quality control of integral membrane proteins. The chain is ATP-dependent zinc metalloprotease FtsH from Mycoplasmopsis synoviae (strain 53) (Mycoplasma synoviae).